Here is a 338-residue protein sequence, read N- to C-terminus: Fusarubin cluster-specific transcription factor fsr6 (338 aa).

A DNA-binding region (zn(2)-C6 fungal-type) is located at residues 16–44 (CDACTTAKVRCSRTHPCERCEDNGQAKEC).

It is found in the nucleus. Transcription factor that regulates the expression of the gene cluster that mediates the biosynthesis of fusarubins, highly pigmented naphthoquinones responsible for the coloration of the fruiting bodies. This Gibberella fujikuroi (strain CBS 195.34 / IMI 58289 / NRRL A-6831) (Bakanae and foot rot disease fungus) protein is Fusarubin cluster-specific transcription factor fsr6.